The following is a 225-amino-acid chain: ATP-dependent dethiobiotin synthetase BioD (225 aa).

13–18 (NVGKTL) is an ATP binding site. Thr17 is a binding site for Mg(2+). Lys38 is a catalytic residue. Residue Thr42 coordinates substrate. ATP contacts are provided by residues Asp55, 116 to 119 (EGAG), 176 to 177 (NH), and 205 to 207 (PWL). 2 residues coordinate Mg(2+): Asp55 and Glu116.

The protein belongs to the dethiobiotin synthetase family. Homodimer. Mg(2+) serves as cofactor.

It is found in the cytoplasm. The enzyme catalyses (7R,8S)-7,8-diammoniononanoate + CO2 + ATP = (4R,5S)-dethiobiotin + ADP + phosphate + 3 H(+). It participates in cofactor biosynthesis; biotin biosynthesis; biotin from 7,8-diaminononanoate: step 1/2. Catalyzes a mechanistically unusual reaction, the ATP-dependent insertion of CO2 between the N7 and N8 nitrogen atoms of 7,8-diaminopelargonic acid (DAPA, also called 7,8-diammoniononanoate) to form a ureido ring. The chain is ATP-dependent dethiobiotin synthetase BioD from Baumannia cicadellinicola subsp. Homalodisca coagulata.